The primary structure comprises 150 residues: Deoxyuridine 5'-triphosphate nucleotidohydrolase (150 aa).

Residues 68-70 (RSG), Asn81, 85-87 (TID), and Lys95 each bind substrate.

The protein belongs to the dUTPase family. Mg(2+) is required as a cofactor.

The catalysed reaction is dUTP + H2O = dUMP + diphosphate + H(+). The protein operates within pyrimidine metabolism; dUMP biosynthesis; dUMP from dCTP (dUTP route): step 2/2. In terms of biological role, this enzyme is involved in nucleotide metabolism: it produces dUMP, the immediate precursor of thymidine nucleotides and it decreases the intracellular concentration of dUTP so that uracil cannot be incorporated into DNA. The protein is Deoxyuridine 5'-triphosphate nucleotidohydrolase of Rickettsia bellii (strain OSU 85-389).